Consider the following 277-residue polypeptide: Caspase-3 (277 aa).

N-acetylmethionine is present on M1. 2 propeptides span residues 1–9 (MENNETSVD) and 10–28 (AKSI…KSMD). K11 is modified (N6-acetyllysine). Phosphoserine is present on S26. Active-site residues include H121 and C163. Position 163 is an S-nitrosocysteine; in inhibited form (C163).

The protein belongs to the peptidase C14A family. Heterotetramer that consists of two anti-parallel arranged heterodimers, each one formed by a 17 kDa (p17) and a 12 kDa (p12) subunit. Interacts with BIRC6/bruce. Post-translationally, cleavage by granzyme B, caspase-6, caspase-8 and caspase-10 generates the two active subunits. Additional processing of the propeptides is likely due to the autocatalytic activity of the activated protease. Active heterodimers between the small subunit of caspase-7 protease and the large subunit of caspase-3 also occur and vice versa. S-nitrosylated on its catalytic site cysteine in unstimulated cell lines and denitrosylated upon activation of the Fas apoptotic pathway, associated with an increase in intracellular caspase activity. Fas therefore activates caspase-3 not only by inducing the cleavage of the caspase zymogen to its active subunits, but also by stimulating the denitrosylation of its active site thiol. In terms of processing, ubiquitinated by BIRC6; this activity is inhibited by DIABLO/SMAC.

The protein localises to the cytoplasm. The catalysed reaction is Strict requirement for an Asp residue at positions P1 and P4. It has a preferred cleavage sequence of Asp-Xaa-Xaa-Asp-|- with a hydrophobic amino-acid residue at P2 and a hydrophilic amino-acid residue at P3, although Val or Ala are also accepted at this position.. Inhibited by BIRC6; following inhibition of BIRC6-caspase binding by DIABLO/SMAC, BIRC6 is subjected to caspase cleavage, leading to an increase in active caspases. In terms of biological role, involved in the activation cascade of caspases responsible for apoptosis execution. At the onset of apoptosis, it proteolytically cleaves poly(ADP-ribose) polymerase PARP1 at a '216-Asp-|-Gly-217' bond. Cleaves and activates sterol regulatory element binding proteins (SREBPs) between the basic helix-loop-helix leucine zipper domain and the membrane attachment domain. Cleaves and activates caspase-6, -7 and -9 (CASP6, CASP7 and CASP9, respectively). Cleaves and inactivates interleukin-18 (IL18). Triggers cell adhesion in sympathetic neurons through RET cleavage. Cleaves IL-1 beta between an Asp and an Ala, releasing the mature cytokine which is involved in a variety of inflammatory processes. Cleaves and inhibits serine/threonine-protein kinase AKT1 in response to oxidative stress. Acts as an inhibitor of type I interferon production during virus-induced apoptosis by mediating cleavage of antiviral proteins CGAS, IRF3 and MAVS, thereby preventing cytokine overproduction. Also involved in pyroptosis by mediating cleavage and activation of gasdermin-E (GSDME). Cleaves XRCC4 and phospholipid scramblase proteins XKR4, XKR8 and XKR9, leading to promote phosphatidylserine exposure on apoptotic cell surface. Cleaves BIRC6 following inhibition of BIRC6-caspase binding by DIABLO/SMAC. This is Caspase-3 (CASP3) from Oryctolagus cuniculus (Rabbit).